A 285-amino-acid polypeptide reads, in one-letter code: Inositol oxygenase (285 aa).

The segment at 1–28 (MKVAADPDPSLVSQRDMEPEAAKDKDSF) is disordered. Residues 15 to 28 (RDMEPEAAKDKDSF) are compositionally biased toward basic and acidic residues. Arginine 29 contributes to the substrate binding site. Serine 33 bears the Phosphoserine mark. 85–87 (DES) serves as a coordination point for substrate. Fe cation contacts are provided by histidine 98, histidine 123, and aspartate 124. Residues lysine 127 and 141 to 142 (GD) each bind substrate. Fe cation contacts are provided by histidine 194, histidine 220, and aspartate 253. Position 220–221 (220–221 (HS)) interacts with substrate.

Belongs to the myo-inositol oxygenase family. It depends on Fe cation as a cofactor.

The protein resides in the cytoplasm. The catalysed reaction is myo-inositol + O2 = D-glucuronate + H2O + H(+). The protein operates within polyol metabolism; myo-inositol degradation into D-glucuronate; D-glucuronate from myo-inositol: step 1/1. The chain is Inositol oxygenase (MIOX) from Bos taurus (Bovine).